The primary structure comprises 448 residues: Phosphoglucosamine mutase (448 aa).

The active-site Phosphoserine intermediate is the Ser108. Mg(2+) contacts are provided by Ser108, Asp247, Asp249, and Asp251. Ser108 bears the Phosphoserine mark.

This sequence belongs to the phosphohexose mutase family. Mg(2+) serves as cofactor. Post-translationally, activated by phosphorylation.

The enzyme catalyses alpha-D-glucosamine 1-phosphate = D-glucosamine 6-phosphate. Catalyzes the conversion of glucosamine-6-phosphate to glucosamine-1-phosphate. The protein is Phosphoglucosamine mutase of Herminiimonas arsenicoxydans.